A 128-amino-acid chain; its full sequence is Dehydrin Xero 1 (128 aa).

Over residues 1 to 19 the composition is skewed to polar residues; sequence MESYQNQSGAQQTHQQLDQ. The segment at 1 to 128 is disordered; the sequence is MESYQNQSGA…IKEKLPGGHH (128 aa). 2 stretches are compositionally biased toward low complexity: residues 23-41 and 48-60; these read PFPA…PAVA and GMLH…SSSS. Basic and acidic residues predominate over residues 75-91; it reads GITEKIKEKLPGHHDSN. Over residues 92 to 104 the composition is skewed to polar residues; that stretch reads KTSSLGSTTTAYD. The segment covering 107-128 has biased composition (basic and acidic residues); that stretch reads TVHHEKKGMMEKIKEKLPGGHH.

It belongs to the plant dehydrin family.

The protein is Dehydrin Xero 1 (XERO1) of Arabidopsis thaliana (Mouse-ear cress).